Reading from the N-terminus, the 151-residue chain is Non-specific lipid transfer protein GPI-anchored 30 (151 aa).

The signal sequence occupies residues 1–22 (MMMGMKFFSFYVVLLLVAASSG). 4 disulfide bridges follow: cysteine 32-cysteine 69, cysteine 39-cysteine 53, cysteine 54-cysteine 97, and cysteine 67-cysteine 106. Residue asparagine 44 is glycosylated (N-linked (GlcNAc...) asparagine). The GPI-anchor amidated serine moiety is linked to residue serine 120. Positions 121-151 (SSIGNTFSQSYWMTTLAIAATVLSYCHHIIS) are cleaved as a propeptide — removed in mature form.

Belongs to the plant LTP family. In terms of tissue distribution, expressed in vascular tissues of all organs. Expressed in seedlings, preferentially in hypocotyls and roots. Also observed in siliques.

The protein localises to the cell membrane. Its function is as follows. Lipid transfer protein that promotes the number of phloem (pro)cambial and pericycle cells. The chain is Non-specific lipid transfer protein GPI-anchored 30 from Arabidopsis thaliana (Mouse-ear cress).